A 303-amino-acid chain; its full sequence is Glycine--tRNA ligase alpha subunit (303 aa).

This sequence belongs to the class-II aminoacyl-tRNA synthetase family. In terms of assembly, tetramer of two alpha and two beta subunits.

It is found in the cytoplasm. The catalysed reaction is tRNA(Gly) + glycine + ATP = glycyl-tRNA(Gly) + AMP + diphosphate. This Streptococcus equi subsp. equi (strain 4047) protein is Glycine--tRNA ligase alpha subunit.